Here is a 154-residue protein sequence, read N- to C-terminus: TSET complex member tstD (154 aa).

This sequence belongs to the adaptor complexes small subunit family. Component of the TSET complex, a heterohexamer composed of tstA, tstB, tstC, tstD, tstE and tstF, which may act in plasma membrane turnover. tstA, tstB, tstC and tstD are likely to be the core complex members with tstE and tstF acting as associated scaffold proteins.

It is found in the cell membrane. The protein resides in the cytoplasm. This chain is TSET complex member tstD, found in Dictyostelium discoideum (Social amoeba).